Consider the following 241-residue polypeptide: tRNA (guanine-N(7)-)-methyltransferase (241 aa).

Residues 1 to 10 are compositionally biased toward polar residues; sequence MTESNETPNT. The tract at residues 1 to 21 is disordered; that stretch reads MTESNETPNTPEAGDESKHRR. Residues E71, E96, D123, and D146 each contribute to the S-adenosyl-L-methionine site. D146 is a catalytic residue. Substrate contacts are provided by residues K150, D182, and 219–222; that span reads TKFE.

The protein belongs to the class I-like SAM-binding methyltransferase superfamily. TrmB family.

It catalyses the reaction guanosine(46) in tRNA + S-adenosyl-L-methionine = N(7)-methylguanosine(46) in tRNA + S-adenosyl-L-homocysteine. It functions in the pathway tRNA modification; N(7)-methylguanine-tRNA biosynthesis. Functionally, catalyzes the formation of N(7)-methylguanine at position 46 (m7G46) in tRNA. The polypeptide is tRNA (guanine-N(7)-)-methyltransferase (Pseudomonas fluorescens (strain SBW25)).